The sequence spans 236 residues: Large ribosomal subunit protein uL1 (236 aa).

It belongs to the universal ribosomal protein uL1 family. In terms of assembly, part of the 50S ribosomal subunit.

Its function is as follows. Binds directly to 23S rRNA. The L1 stalk is quite mobile in the ribosome, and is involved in E site tRNA release. In terms of biological role, protein L1 is also a translational repressor protein, it controls the translation of the L11 operon by binding to its mRNA. This is Large ribosomal subunit protein uL1 from Corynebacterium efficiens (strain DSM 44549 / YS-314 / AJ 12310 / JCM 11189 / NBRC 100395).